The sequence spans 309 residues: Polyprenal reductase (309 aa).

The next 7 helical transmembrane spans lie at 12-32 (LPLY…FTLI), 72-92 (FYAI…SLIY), 114-134 (IPPI…LHVA), 151-171 (MNLF…ISIM), 184-204 (LHVS…LFWI), 242-262 (LVSC…FLVI), and 270-290 (FIIM…HSWY).

This sequence belongs to the steroid 5-alpha reductase family. Polyprenal reductase subfamily.

It localises to the endoplasmic reticulum membrane. The enzyme catalyses a di-trans,poly-cis-dolichal + NADP(+) = a di-trans,poly-cis-polyprenal + NADPH + H(+). The protein operates within protein modification; protein glycosylation. Functionally, plays a key role in early steps of protein N-linked glycosylation by being involved in the conversion of polyprenol into dolichol. Acts as a polyprenal reductase that mediates the reduction of polyprenal into dolichal in a NADP-dependent mechanism. Dolichols are required for the synthesis of dolichol-linked monosaccharides and the oligosaccharide precursor used for N-glycosylation. This Caenorhabditis elegans protein is Polyprenal reductase.